Reading from the N-terminus, the 360-residue chain is Probable dual-specificity RNA methyltransferase RlmN (360 aa).

E103 functions as the Proton acceptor in the catalytic mechanism. The region spanning 109–342 (HEYGNSVCVT…VTIRREQGHD (234 aa)) is the Radical SAM core domain. C116 and C347 are disulfide-bonded. [4Fe-4S] cluster is bound by residues C123, C127, and C130. S-adenosyl-L-methionine is bound by residues 173–174 (GE), S205, 228–230 (SLH), and N304. The active-site S-methylcysteine intermediate is the C347.

The protein belongs to the radical SAM superfamily. RlmN family. [4Fe-4S] cluster serves as cofactor.

It localises to the cytoplasm. It carries out the reaction adenosine(2503) in 23S rRNA + 2 reduced [2Fe-2S]-[ferredoxin] + 2 S-adenosyl-L-methionine = 2-methyladenosine(2503) in 23S rRNA + 5'-deoxyadenosine + L-methionine + 2 oxidized [2Fe-2S]-[ferredoxin] + S-adenosyl-L-homocysteine. It catalyses the reaction adenosine(37) in tRNA + 2 reduced [2Fe-2S]-[ferredoxin] + 2 S-adenosyl-L-methionine = 2-methyladenosine(37) in tRNA + 5'-deoxyadenosine + L-methionine + 2 oxidized [2Fe-2S]-[ferredoxin] + S-adenosyl-L-homocysteine. In terms of biological role, specifically methylates position 2 of adenine 2503 in 23S rRNA and position 2 of adenine 37 in tRNAs. This is Probable dual-specificity RNA methyltransferase RlmN from Bacillus pumilus (strain SAFR-032).